The chain runs to 120 residues: MKMAVLVRTDLDMGKGKIAAQVAHAAVSLVLEIVQKRSKAEWKEWLEMWINQGQPKIVLKVKNLDELLEKYNKALQSGLPATIIQDAGKTQIEPGTITCAGIGPGPEEMIDNITGDLKLL.

It belongs to the PTH2 family.

The protein localises to the cytoplasm. The catalysed reaction is an N-acyl-L-alpha-aminoacyl-tRNA + H2O = an N-acyl-L-amino acid + a tRNA + H(+). Its function is as follows. The natural substrate for this enzyme may be peptidyl-tRNAs which drop off the ribosome during protein synthesis. The polypeptide is Peptidyl-tRNA hydrolase (Sulfolobus acidocaldarius (strain ATCC 33909 / DSM 639 / JCM 8929 / NBRC 15157 / NCIMB 11770)).